A 296-amino-acid chain; its full sequence is Lipoyl synthase (296 aa).

[4Fe-4S] cluster contacts are provided by cysteine 35, cysteine 40, cysteine 46, cysteine 61, cysteine 65, cysteine 68, and serine 274. Residues 47–263 form the Radical SAM core domain; that stretch reads WSSKHVTVMI…KEAAYARGFL (217 aa).

The protein belongs to the radical SAM superfamily. Lipoyl synthase family. It depends on [4Fe-4S] cluster as a cofactor.

It localises to the cytoplasm. It carries out the reaction [[Fe-S] cluster scaffold protein carrying a second [4Fe-4S](2+) cluster] + N(6)-octanoyl-L-lysyl-[protein] + 2 oxidized [2Fe-2S]-[ferredoxin] + 2 S-adenosyl-L-methionine + 4 H(+) = [[Fe-S] cluster scaffold protein] + N(6)-[(R)-dihydrolipoyl]-L-lysyl-[protein] + 4 Fe(3+) + 2 hydrogen sulfide + 2 5'-deoxyadenosine + 2 L-methionine + 2 reduced [2Fe-2S]-[ferredoxin]. Its pathway is protein modification; protein lipoylation via endogenous pathway; protein N(6)-(lipoyl)lysine from octanoyl-[acyl-carrier-protein]: step 2/2. Catalyzes the radical-mediated insertion of two sulfur atoms into the C-6 and C-8 positions of the octanoyl moiety bound to the lipoyl domains of lipoate-dependent enzymes, thereby converting the octanoylated domains into lipoylated derivatives. The chain is Lipoyl synthase from Neorickettsia sennetsu (strain ATCC VR-367 / Miyayama) (Ehrlichia sennetsu).